Here is a 738-residue protein sequence, read N- to C-terminus: MARASSSSGPLPPLANVPSSWAQPVGAGEERDEGRRGGLGLLAAVSVPCPDFSRQPWAPASASGPMPFALQRLRATLLRLHREREQLLRARDCARHLQAVVRLLRSGSSAGSLSLQQLHGDLQLCPSRGAALRLGFPGSRETLLLTRPVGLAAQHLEAAIEMQLRSLGRTPASLGLTSQLAELLLALPFYHTLQGHSLNFVPGAARPFPAARVLQLLAAERGCQVADKLAEARGGSGLQEQLRRQCEQERELLPGLLGLVGGVASTDSSGLRLGGPGALWSQYWTLLWAACAKCLDLRVGPWEDPRAMAQELSQALCQAPLPQECEKELLSLCHSLFHQSVICSWDQGFCQALGSALGGQSSPASLSPTSELLQRLFPPLLDSLRQPRPELRLCPPAGPTPVALGLCTLQTTLLWFVGRAQQHLAAWDPGSFLLLLQKDLPPLLSAVEALSSLASEAALTLEVEQQLGLEIHNLTEKMQLLPKESLGLFVQECHKQATQGFKLHMPRGRYWRLRLCPEPPSDPSEYARIVVYSVLEPVLQGLQGLPPEAQAPALGQALTATLGAWLDHILTHGIRFSLQGALQLKQDFGVVREVLEQEQWGLSQELRQTLLSLSIFQQLDGALLCLLQQPLPKNPVHRRPPRCCLCYEVQTTELPTSSLNSLENLAPPLRLGVSPAQNTHLLSTLGGGGRGGGGGGGPGPSPEAYLVGNQQAWLALRLHQHPRWHLPFFSCLRTSPEP.

Positions 1 to 34 are disordered; that stretch reads MARASSSSGPLPPLANVPSSWAQPVGAGEERDEG. Positions 69–92 form a coiled coil; that stretch reads ALQRLRATLLRLHREREQLLRARD. The disordered stretch occupies residues 682 to 704; sequence LSTLGGGGRGGGGGGGPGPSPEA. Positions 685–698 are enriched in gly residues; it reads LGGGGRGGGGGGGP.

This Mus musculus (Mouse) protein is Coiled-coil domain-containing protein 142 (Ccdc142).